The sequence spans 176 residues: Probable inosine/xanthosine triphosphatase (176 aa).

Residue Asp-36 coordinates Mg(2+).

Belongs to the YjjX NTPase family. As to quaternary structure, homodimer. The cofactor is Mg(2+). Mn(2+) is required as a cofactor.

The catalysed reaction is XTP + H2O = XDP + phosphate + H(+). It carries out the reaction ITP + H2O = IDP + phosphate + H(+). In terms of biological role, phosphatase that hydrolyzes non-canonical purine nucleotides such as XTP and ITP to their respective diphosphate derivatives. Probably excludes non-canonical purines from DNA/RNA precursor pool, thus preventing their incorporation into DNA/RNA and avoiding chromosomal lesions. The chain is Probable inosine/xanthosine triphosphatase from Saccharolobus islandicus (strain M.14.25 / Kamchatka #1) (Sulfolobus islandicus).